The chain runs to 351 residues: Methylthioribose-1-phosphate isomerase (351 aa).

The Proton donor role is filled by D244.

It belongs to the eIF-2B alpha/beta/delta subunits family. MtnA subfamily.

The protein localises to the cytoplasm. Its subcellular location is the nucleus. It catalyses the reaction 5-(methylsulfanyl)-alpha-D-ribose 1-phosphate = 5-(methylsulfanyl)-D-ribulose 1-phosphate. It participates in amino-acid biosynthesis; L-methionine biosynthesis via salvage pathway; L-methionine from S-methyl-5-thio-alpha-D-ribose 1-phosphate: step 1/6. Its function is as follows. Catalyzes the interconversion of methylthioribose-1-phosphate (MTR-1-P) into methylthioribulose-1-phosphate (MTRu-1-P). The chain is Methylthioribose-1-phosphate isomerase from Anopheles gambiae (African malaria mosquito).